A 180-amino-acid chain; its full sequence is Cytidylate kinase (180 aa).

7–15 (GLPGSGTTT) is a binding site for ATP.

Belongs to the cytidylate kinase family. Type 2 subfamily.

It localises to the cytoplasm. It carries out the reaction CMP + ATP = CDP + ADP. It catalyses the reaction dCMP + ATP = dCDP + ADP. The chain is Cytidylate kinase from Methanosarcina acetivorans (strain ATCC 35395 / DSM 2834 / JCM 12185 / C2A).